The sequence spans 70 residues: Large ribosomal subunit protein uL30 (70 aa).

It belongs to the universal ribosomal protein uL30 family. As to quaternary structure, part of the 50S ribosomal subunit.

This is Large ribosomal subunit protein uL30 from Renibacterium salmoninarum (strain ATCC 33209 / DSM 20767 / JCM 11484 / NBRC 15589 / NCIMB 2235).